The primary structure comprises 136 residues: Large ribosomal subunit protein uL16 (136 aa).

This sequence belongs to the universal ribosomal protein uL16 family. Part of the 50S ribosomal subunit.

In terms of biological role, binds 23S rRNA and is also seen to make contacts with the A and possibly P site tRNAs. The chain is Large ribosomal subunit protein uL16 from Rickettsia canadensis (strain McKiel).